The primary structure comprises 302 residues: Methylsterol monooxygenase erg25A (302 aa).

Asn-5 is a glycosylation site (N-linked (GlcNAc...) asparagine). Transmembrane regions (helical) follow at residues 47 to 67, 105 to 125, and 132 to 152; these read NIVA…IYFS, YILL…HPMM, and FTIP…FFLL. The Fatty acid hydroxylase domain maps to 147 to 283; that stretch reads IIFFLLEDTY…FRHWDVLMGT (137 aa). Positions 161 to 165 match the Histidine box-1 motif; sequence HRAMH. Residues 174–178 carry the Histidine box-2 motif; sequence HRIHH. Residues 193 to 213 traverse the membrane as a helical segment; the sequence is PWETLLLGLGTIGPPLLLALM. Residues 258 to 264 carry the Histidine box-3 motif; the sequence is WHDDHHR. Asn-269 carries N-linked (GlcNAc...) asparagine glycosylation.

The protein belongs to the sterol desaturase family. Requires Fe cation as cofactor.

It localises to the endoplasmic reticulum membrane. Its pathway is steroid metabolism; ergosterol biosynthesis. Functionally, sterol-C4-methyl oxidase; part of the third module of ergosterol biosynthesis pathway that includes the late steps of the pathway. Erg25A is a catalytic component of the C-4 demethylation complex that catalyzes the conversion of 4,4-dimethylfecosterol into fecosterol via 4-methylfecosterol. The third module or late pathway involves the ergosterol synthesis itself through consecutive reactions that mainly occur in the endoplasmic reticulum (ER) membrane. Firstly, the squalene synthase erg9 catalyzes the condensation of 2 farnesyl pyrophosphate moieties to form squalene, which is the precursor of all steroids. Squalene synthase is crucial for balancing the incorporation of farnesyl diphosphate (FPP) into sterol and nonsterol isoprene synthesis. Secondly, squalene is converted into lanosterol by the consecutive action of the squalene epoxidase erg1 and the lanosterol synthase erg7. Then, the delta(24)-sterol C-methyltransferase erg6 methylates lanosterol at C-24 to produce eburicol. Eburicol is the substrate of the sterol 14-alpha demethylase encoded by cyp51A and cyp51B, to yield 4,4,24-trimethyl ergosta-8,14,24(28)-trienol. The C-14 reductase erg24 then reduces the C14=C15 double bond which leads to 4,4-dimethylfecosterol. A sequence of further demethylations at C-4, involving the C-4 demethylation complex containing the C-4 methylsterol oxidases erg25A or erg25B, the sterol-4-alpha-carboxylate 3-dehydrogenase erg26 and the 3-keto-steroid reductase erg27, leads to the production of fecosterol via 4-methylfecosterol. The C-8 sterol isomerase erg2 then catalyzes the reaction which results in unsaturation at C-7 in the B ring of sterols and thus converts fecosterol to episterol. The sterol-C5-desaturase erg3B then catalyzes the introduction of a C-5 double bond in the B ring to produce 5-dehydroepisterol. The 2 other sterol-C5-desaturases, erg3A and erg3C, seem to be less important in ergosterol biosynthesis. The C-22 sterol desaturase erg5 further converts 5-dehydroepisterol into ergosta-5,7,22,24(28)-tetraen-3beta-ol by forming the C-22(23) double bond in the sterol side chain. Finally, ergosta-5,7,22,24(28)-tetraen-3beta-ol is substrate of the C-24(28) sterol reductases erg4A and erg4B to produce ergosterol. Possible alternative sterol biosynthetic pathways might exist from fecosterol to ergosterol, depending on the activities of the erg3 isoforms. The polypeptide is Methylsterol monooxygenase erg25A (Aspergillus fumigatus (strain ATCC MYA-4609 / CBS 101355 / FGSC A1100 / Af293) (Neosartorya fumigata)).